Consider the following 757-residue polypeptide: Dapper homolog 2 (757 aa).

Positions 1–281 are inhibition of Nodal signaling; it reads MWAPSGQGPA…QSPLFALPKE (281 aa). Residues 55–107 adopt a coiled-coil conformation; sequence RGQELRLEAALTALREQLSRLRRQDAGLKTHLDQLDQQISELQLDVSRSSCEA. Disordered regions lie at residues 486–540, 584–684, and 696–728; these read RRRV…CSES, RWQS…EGCF, and AEAG…PPVP. 2 stretches are compositionally biased toward basic and acidic residues: residues 505–516 and 631–644; these read ERQRVTERDPSR and ACAR…EHSA. The span at 645–656 shows a compositional bias: polar residues; it reads DCTSLYHSTIAE. The segment covering 664–673 has biased composition (basic and acidic residues); sequence SDHTANRFGD. The short motif at 754–757 is the PDZ-binding element; that stretch reads MTMV.

Belongs to the dapper family. As to quaternary structure, can form homodimers and heterodimers with DACT1 or DACT3. Interacts with CSNK1D, PKA catalytic subunit, PKC-type kinase, CSNK2B, DVL1, DVL2, DVL3, VANGL1, VANGL2, TGFBR1, CTNNB1, CTNND2, CTNND1, LEF1, TCF7, TCF7L1 and HDAC1. As to expression, expressed in kidney (inner medullary collecting duct). Expressed in epidermal keratinocytes and hair follicles.

Functionally, involved in regulation of intracellular signaling pathways during development. Negatively regulates the Nodal signaling pathway, possibly by promoting the lysosomal degradation of Nodal receptors, such as TGFBR1. May be involved in control of the morphogenetic behavior of kidney ureteric bud cells by keeping cells epithelial and restraining their mesenchymal character. May play an inhibitory role in the re-epithelialization of skin wounds by attenuating TGF-beta signaling. The protein is Dapper homolog 2 (Dact2) of Mus musculus (Mouse).